A 162-amino-acid polypeptide reads, in one-letter code: Class I hydrophobin dewC (162 aa).

The first 21 residues, 1–21, serve as a signal peptide directing secretion; it reads MQFTIASLIATAVLGLQMASA. Cystine bridges form between Cys-43-Cys-119, Cys-50-Cys-113, Cys-51-Cys-90, and Cys-120-Cys-156.

This sequence belongs to the fungal hydrophobin family. As to quaternary structure, self-assembles to form functional amyloid fibrils called rodlets. Self-assembly into fibrillar rodlets occurs spontaneously at hydrophobic:hydrophilic interfaces and the rodlets further associate laterally to form amphipathic monolayers.

It is found in the secreted. The protein resides in the spore wall. In terms of biological role, aerial growth, conidiation, and dispersal of filamentous fungi in the environment rely upon a capability of their secreting small amphipathic proteins called hydrophobins (HPBs) with low sequence identity. Class I can self-assemble into an outermost layer of rodlet bundles on aerial cell surfaces, conferring cellular hydrophobicity that supports fungal growth, development and dispersal; whereas Class II form highly ordered films at water-air interfaces through intermolecular interactions but contribute nothing to the rodlet structure. DewC is a class I hydrophobin that contributes to the hydrophobicity of the spore surface. This Emericella nidulans (strain FGSC A4 / ATCC 38163 / CBS 112.46 / NRRL 194 / M139) (Aspergillus nidulans) protein is Class I hydrophobin dewC.